The primary structure comprises 688 residues: Elongation factor G (688 aa).

The 275-residue stretch at 8–282 (EKFRNIGIMA…AVVDFMPSPL (275 aa)) folds into the tr-type G domain. Residues 17 to 24 (AHIDAGKT), 81 to 85 (DTPGH), and 135 to 138 (NKMD) contribute to the GTP site. Positions 282–305 (LDIPPIKGTDPETGEETDRPADDN) are disordered.

This sequence belongs to the TRAFAC class translation factor GTPase superfamily. Classic translation factor GTPase family. EF-G/EF-2 subfamily.

It is found in the cytoplasm. Catalyzes the GTP-dependent ribosomal translocation step during translation elongation. During this step, the ribosome changes from the pre-translocational (PRE) to the post-translocational (POST) state as the newly formed A-site-bound peptidyl-tRNA and P-site-bound deacylated tRNA move to the P and E sites, respectively. Catalyzes the coordinated movement of the two tRNA molecules, the mRNA and conformational changes in the ribosome. The polypeptide is Elongation factor G (Clostridium kluyveri (strain NBRC 12016)).